We begin with the raw amino-acid sequence, 444 residues long: C4-dicarboxylate transport protein (444 aa).

9 helical membrane-spanning segments follow: residues 18–40 (FYSH…GHFY), 53–75 (AFIK…TGIA), 90–112 (AMLY…ANVV), 142–159 (IVGF…GAFA), 163–180 (ILQV…LAMV), 201–222 (LVAI…FTIG), 232–254 (LAML…LGAV), 327–349 (LFIA…LLVA), and 364–386 (FITL…ALIL).

This sequence belongs to the dicarboxylate/amino acid:cation symporter (DAACS) (TC 2.A.23) family.

Its subcellular location is the cell inner membrane. Responsible for the transport of dicarboxylates such as succinate, fumarate, and malate from the periplasm across the inner membrane. This transport system plays an important role in the energy supply of rhizobium-legume symbionts. This chain is C4-dicarboxylate transport protein (dctA), found in Rhizobium leguminosarum.